Reading from the N-terminus, the 417-residue chain is NADH-quinone oxidoreductase subunit D (417 aa).

The protein belongs to the complex I 49 kDa subunit family. NDH-1 is composed of 14 different subunits. Subunits NuoB, C, D, E, F, and G constitute the peripheral sector of the complex.

The protein resides in the cell inner membrane. The catalysed reaction is a quinone + NADH + 5 H(+)(in) = a quinol + NAD(+) + 4 H(+)(out). NDH-1 shuttles electrons from NADH, via FMN and iron-sulfur (Fe-S) centers, to quinones in the respiratory chain. The immediate electron acceptor for the enzyme in this species is believed to be ubiquinone. Couples the redox reaction to proton translocation (for every two electrons transferred, four hydrogen ions are translocated across the cytoplasmic membrane), and thus conserves the redox energy in a proton gradient. The polypeptide is NADH-quinone oxidoreductase subunit D (Francisella tularensis subsp. mediasiatica (strain FSC147)).